The following is a 793-amino-acid chain: Calcium permeable stress-gated cation channel 1 (793 aa).

Residues Met1–Leu21 lie on the Lumenal side of the membrane. The helical transmembrane segment at Arg22–Phe42 threads the bilayer. Residues Arg43 to Leu95 are Cytoplasmic-facing. A helical membrane pass occupies residues Leu96–Ile116. The Lumenal segment spans residues Met117 to Gly192. Residues Phe193–Phe213 form a helical membrane-spanning segment. Residues Ser214–Thr444 are Cytoplasmic-facing. A helical membrane pass occupies residues Leu445–Ile465. The Lumenal segment spans residues Asn466–Thr493. The helical transmembrane segment at Phe494 to Leu514 threads the bilayer. Topologically, residues Ser515–Asn534 are cytoplasmic. Residues Tyr535–Trp555 form a helical membrane-spanning segment. Residues Glu556–Gln577 lie on the Lumenal side of the membrane. Residues Phe578–Leu598 form a helical membrane-spanning segment. Topologically, residues Gly599–Ser646 are cytoplasmic. Residues Ile647–Tyr667 traverse the membrane as a helical segment. Over Lys668 to Ser687 the chain is Lumenal. The chain crosses the membrane as a helical span at residues Thr688–Met708. The Cytoplasmic segment spans residues Ser709–Ala713. The helical transmembrane segment at Tyr714 to Phe734 threads the bilayer. At Ser735–Ala793 the chain is on the lumenal side. Residues Ser759–Phe778 are disordered.

Belongs to the CSC1 (TC 1.A.17) family.

The protein localises to the vacuole membrane. In terms of biological role, acts as an osmosensitive calcium-permeable cation channel. The chain is Calcium permeable stress-gated cation channel 1 from Schizosaccharomyces pombe (strain 972 / ATCC 24843) (Fission yeast).